The sequence spans 260 residues: HTH-type transcriptional repressor NanR (260 aa).

Positions 27-95 constitute an HTH gntR-type domain; sequence KKLSDMVEEE…NGERARVSMP (69 aa). The H-T-H motif DNA-binding region spans 55 to 74; it reads ERELMEFFNVGRPSVREALA.

This sequence belongs to the NanR family.

Transcriptional repressor that controls expression of the genes required for the catabolism of sialic acids. The polypeptide is HTH-type transcriptional repressor NanR (Enterobacter sp. (strain 638)).